Consider the following 644-residue polypeptide: Core protein VP4 (644 aa).

Belongs to the orbivirus VP4 family.

Its subcellular location is the virion. Functionally, the VP4 protein is one of the five proteins (with VP1, VP3, VP6 and VP7) which form the inner capsid of the virus. This chain is Core protein VP4 (Segment-4), found in Antilocapra americana (Pronghorn).